Reading from the N-terminus, the 1382-residue chain is MPEEEFEWNESKLNALSEILTQWAPHDELKLENVILEAKMAWIHESTDAVALEKEFEKLLNTSFDPLMDYEEHQRVKNGVCSPAKSTKLDWITKWANIAEKLSISHINCSKAPHKTINFQRLQILPNMTSILAIAHTEADNVILIYGHTKEGIDFQTVLRHSYSNIPDGSLQTIHFLTKNLLDLYSQLFSRKITAEFKTRHFRCLPSFWLQYDVLAPIFEQFRAPRAPRIPLDEATSNWANRKWENYQYLTYLNDITGRVRGEVHNHPIFPWVCDFSEENGGFRQLNRTKYRLCKGDDQLREMYSREPSHHVPELLSDIGYMVYRARVEPKDNLCRHVRRKWVPEEYPSTMSRMYQWTPDECIPEFYDDPSIFNSCHPDMADLRFPEFVSSPQEFIEWHRKMLEHEEVSMNLHRWIDLVFGFNLAIDNSKNALNLHLCFVEKNRRGLRTTGMVQLFNRPHPIRMPLNYDPKLDNYHLKMESFGFGMTSEHRKEPEVEPDEDSHYQIYQKIKKVRRLRHNTYFSSMVSAMEVMAQIVLAPHLAGRFDDPDHIRRCIQLYSYRIPANYRRLFDFLFNTEQDFPDCDEFSFFVSVRLNIPTKILNFSEEFGKCVSLHILRKLDVIPPFSKRSQLIILKEVESLKKSIRLCDHMEQCVVAAFQQLLEDEEACIQSVHRLMPVITRSLSQSALEDLINPMIELIQCETSVKLLDRRFLMHVSICYGTHTFLDLFLPPIVEACASMNCDRSVVAKESIMWLAKRYGPVICAKFISSNVLRIMASCYEAFEMVGLEQQPKAVFNVVLQGDETCSRIESLLSEIVLTYSVTFITVQFLPFCVDLIEQFHKRSSVQLEPGLVSVFRIVELSIRSMSDHQLMNYLEEFIIQKVIYRVLTILLDASFQFSSMRVRIIIICKVCQLLHSITQKIGTENTRIYANQPFKLMFSTFSEIYETDEELRINLRKRPSENTLFEVPLWMVEDVVDKFAKEWGVPFLSSFCDDPAFLIPFVSNSSSSSSPPASIAHSPPSAFTAYSLGGMSSGNRLFSLSASSPVNSVNSLGGLSFCDSGSLSAVWCARVSAAVCGVDNYRFDHLSLCNYTGHQEKIRKLAAISNENSFVSASSDKTVKLWSIKPELDEIGCQWTYQKHTRPVHDITILADNSIASTDGVLHVWDPFRTTLLAQMEWDSKEGSGGNIMRVENVDRHILSAICSLHSTVKLFDSRVGGWTCELKVSPGPGLTRAITVRDKGNKMAVALSNGTLAILDARNGKINALAQTNSTHTVSVNWLSDTRLLVCDADECGIFLETNPRAHIVRKLQDPVSAACLTDNSLVTLQNGTILRVYRNSGELQIETKIRPDELPGTPTAVLPLPLNCSYLIGSSHGAIRLMC.

The region spanning 229–463 (RIPLDEATSN…QLFNRPHPIR (235 aa)) is the BEACH domain. WD repeat units follow at residues 1094–1133 (GHQE…DEIG) and 1140–1176 (KHTR…LLAQ).

This sequence belongs to the WD repeat WDR81 family. Interacts with sorf-1; the interaction is direct. Interacts with bec-1.

It is found in the early endosome. Its subcellular location is the late endosome. The protein localises to the cytoplasm. Functionally, together with sorf-1 negatively regulates the levels of phosphatidylinositol 3-phosphate (PtdIns3P) to enable the conversion of early endosomes to late endosomes. Binds to sorf-1 and the sorf-1-sorf-2 complex likely acts through bec-1, a non-catalytic subunit of phosphatidylinositol 3-kinase (PI3K), to suppress PI3K activity, thereby negatively regulating endosomal PtdIns3P levels. This is Suppressor of organelle fusion 2 from Caenorhabditis elegans.